A 338-amino-acid chain; its full sequence is Ketol-acid reductoisomerase (NADP(+)) (338 aa).

The KARI N-terminal Rossmann domain maps to 1–181 (MKVYYDKDAD…GGTRGGVIET (181 aa)). NADP(+) contacts are provided by residues 24 to 27 (YGSQ), arginine 47, and serine 52. Histidine 107 is a catalytic residue. Glycine 133 contacts NADP(+). The KARI C-terminal knotted domain maps to 182 to 327 (TFKEETETDL…AKLRDMMPWI (146 aa)). Residues aspartate 190, glutamate 194, glutamate 226, and glutamate 230 each contribute to the Mg(2+) site. Serine 251 provides a ligand contact to substrate.

This sequence belongs to the ketol-acid reductoisomerase family. Requires Mg(2+) as cofactor.

The catalysed reaction is (2R)-2,3-dihydroxy-3-methylbutanoate + NADP(+) = (2S)-2-acetolactate + NADPH + H(+). It carries out the reaction (2R,3R)-2,3-dihydroxy-3-methylpentanoate + NADP(+) = (S)-2-ethyl-2-hydroxy-3-oxobutanoate + NADPH + H(+). It participates in amino-acid biosynthesis; L-isoleucine biosynthesis; L-isoleucine from 2-oxobutanoate: step 2/4. It functions in the pathway amino-acid biosynthesis; L-valine biosynthesis; L-valine from pyruvate: step 2/4. Functionally, involved in the biosynthesis of branched-chain amino acids (BCAA). Catalyzes an alkyl-migration followed by a ketol-acid reduction of (S)-2-acetolactate (S2AL) to yield (R)-2,3-dihydroxy-isovalerate. In the isomerase reaction, S2AL is rearranged via a Mg-dependent methyl migration to produce 3-hydroxy-3-methyl-2-ketobutyrate (HMKB). In the reductase reaction, this 2-ketoacid undergoes a metal-dependent reduction by NADPH to yield (R)-2,3-dihydroxy-isovalerate. The chain is Ketol-acid reductoisomerase (NADP(+)) from Nitrosomonas europaea (strain ATCC 19718 / CIP 103999 / KCTC 2705 / NBRC 14298).